The primary structure comprises 166 residues: Endoribonuclease YbeY (166 aa).

3 residues coordinate Zn(2+): H132, H136, and H142.

This sequence belongs to the endoribonuclease YbeY family. It depends on Zn(2+) as a cofactor.

Its subcellular location is the cytoplasm. Single strand-specific metallo-endoribonuclease involved in late-stage 70S ribosome quality control and in maturation of the 3' terminus of the 16S rRNA. In Clostridium botulinum (strain Loch Maree / Type A3), this protein is Endoribonuclease YbeY.